The sequence spans 131 residues: Transcription antitermination protein NusB (131 aa).

Belongs to the NusB family.

Involved in transcription antitermination. Required for transcription of ribosomal RNA (rRNA) genes. Binds specifically to the boxA antiterminator sequence of the ribosomal RNA (rrn) operons. This is Transcription antitermination protein NusB from Bacillus subtilis (strain 168).